Here is a 261-residue protein sequence, read N- to C-terminus: Enolase-phosphatase E1 (261 aa).

Mg(2+)-binding residues include Asp-16 and Glu-18. Substrate is bound by residues 153–154 (SS) and Lys-187. Asp-212 is a binding site for Mg(2+).

This sequence belongs to the HAD-like hydrolase superfamily. MasA/MtnC family. In terms of assembly, monomer. It depends on Mg(2+) as a cofactor.

Its subcellular location is the cytoplasm. It is found in the nucleus. The catalysed reaction is 5-methylsulfanyl-2,3-dioxopentyl phosphate + H2O = 1,2-dihydroxy-5-(methylsulfanyl)pent-1-en-3-one + phosphate. The protein operates within amino-acid biosynthesis; L-methionine biosynthesis via salvage pathway; L-methionine from S-methyl-5-thio-alpha-D-ribose 1-phosphate: step 3/6. It participates in amino-acid biosynthesis; L-methionine biosynthesis via salvage pathway; L-methionine from S-methyl-5-thio-alpha-D-ribose 1-phosphate: step 4/6. Functionally, bifunctional enzyme that catalyzes the enolization of 2,3-diketo-5-methylthiopentyl-1-phosphate (DK-MTP-1-P) into the intermediate 2-hydroxy-3-keto-5-methylthiopentenyl-1-phosphate (HK-MTPenyl-1-P), which is then dephosphorylated to form the acireductone 1,2-dihydroxy-3-keto-5-methylthiopentene (DHK-MTPene). In Homo sapiens (Human), this protein is Enolase-phosphatase E1.